A 350-amino-acid polypeptide reads, in one-letter code: Homoserine O-succinyltransferase (350 aa).

Residue Cys146 is the Acyl-thioester intermediate of the active site. Residues Lys167 and Ser196 each coordinate substrate. The Proton acceptor role is filled by His239. Residue Glu241 is part of the active site. Arg253 contacts substrate.

It belongs to the MetA family.

The protein resides in the cytoplasm. The enzyme catalyses L-homoserine + succinyl-CoA = O-succinyl-L-homoserine + CoA. It functions in the pathway amino-acid biosynthesis; L-methionine biosynthesis via de novo pathway; O-succinyl-L-homoserine from L-homoserine: step 1/1. Functionally, transfers a succinyl group from succinyl-CoA to L-homoserine, forming succinyl-L-homoserine. In Cardiobacterium hominis (strain ATCC 15826 / DSM 8339 / NCTC 10426 / 6573), this protein is Homoserine O-succinyltransferase.